The following is a 303-amino-acid chain: sn-1-specific diacylglycerol lipase ABHD11 (303 aa).

The N-terminal 22 residues, 1-22 (MLRWTRAWTAPYRGIGLSNSSF), are a transit peptide targeting the mitochondrion. The AB hydrolase-1 domain maps to 55-290 (PALVFLHGLF…NAGHWVHSDR (236 aa)). The residue at position 75 (K75) is an N6-succinyllysine. Catalysis depends on charge relay system residues S129, D225, and H284.

The protein belongs to the AB hydrolase superfamily. As to quaternary structure, interacts with OGDH and DLST; this interaction maintains the functional lipoylation of the 2-oxoglutarate dehydrogenase complex. Phosphorylated.

The protein localises to the mitochondrion. It is found in the mitochondrion matrix. The enzyme catalyses a 1,3-diacyl-sn-glycerol + H2O = a 1-acyl-sn-glycerol + a fatty acid + H(+). The catalysed reaction is 1-octadecanoyl-2-(9Z-octadecenoyl)-sn-glycerol + H2O = 2-(9Z-octadecenoyl)-glycerol + octadecanoate + H(+). It catalyses the reaction 1-octadecanoyl-2-(4Z,7Z,10Z,13Z,16Z,19Z-docosahexaenoyl)-sn-glycerol + H2O = 2-(4Z,7Z,10Z,13Z,16Z,19Z-docosahexaenoyl)-glycerol + octadecanoate + H(+). It carries out the reaction a 1,2-diacyl-sn-glycerol + H2O = a 2-acylglycerol + a fatty acid + H(+). The enzyme catalyses 1,2-didecanoylglycerol + H2O = decanoylglycerol + decanoate + H(+). The catalysed reaction is 1-octadecanoyl-2-(5Z,8Z,11Z,14Z-eicosatetraenoyl)-sn-glycerol + H2O = 2-(5Z,8Z,11Z,14Z-eicosatetraenoyl)-glycerol + octadecanoate + H(+). Its activity is regulated as follows. The diacylglycerol lipase activity can be modulated by phosphorylation by cAMP-dependent protein kinase. Its function is as follows. Catalyzes the hydrolysis of diacylglycerol in vitro and may function as a key regulator in lipid metabolism, namely by regulating the intracellular levels of diacylglycerol. 1,2-diacyl-sn-glycerols are the preferred substrate over 1,3-diacyl-sn-glycerols. The enzyme hydrolyzes stearate in preference to palmitate from the sn-1 position of 1,2-diacyl-sn-glycerols. Maintains the functional lipoylation of the 2-oxoglutarate dehydrogenase complex (OGDHc) through its interaction with the OGDHc by preventing the formation of lipoyl adducts. In addition, is also required for the expansion and differentiation of embryonic stem cells (ESCs). The polypeptide is sn-1-specific diacylglycerol lipase ABHD11 (Bos taurus (Bovine)).